We begin with the raw amino-acid sequence, 272 residues long: Sulfur carrier protein FdhD (272 aa).

C114 serves as the catalytic Cysteine persulfide intermediate.

This sequence belongs to the FdhD family.

The protein resides in the cytoplasm. Functionally, required for formate dehydrogenase (FDH) activity. Acts as a sulfur carrier protein that transfers sulfur from IscS to the molybdenum cofactor prior to its insertion into FDH. The chain is Sulfur carrier protein FdhD from Mycolicibacterium paratuberculosis (strain ATCC BAA-968 / K-10) (Mycobacterium paratuberculosis).